Here is a 296-residue protein sequence, read N- to C-terminus: Nucleotide-binding protein Spy49_0545 (296 aa).

13-20 (GMSGAGKT) serves as a coordination point for ATP. 63–66 (DMRS) provides a ligand contact to GTP.

The protein belongs to the RapZ-like family.

Displays ATPase and GTPase activities. This Streptococcus pyogenes serotype M49 (strain NZ131) protein is Nucleotide-binding protein Spy49_0545.